Consider the following 182-residue polypeptide: Glutamyl-tRNA(Gln) amidotransferase subunit F, mitochondrial (182 aa).

This sequence belongs to the GatF family. As to quaternary structure, subunit of the heterotrimeric GatFAB amidotransferase (AdT) complex, composed of A, B and F subunits.

It is found in the mitochondrion inner membrane. The enzyme catalyses L-glutamyl-tRNA(Gln) + L-glutamine + ATP + H2O = L-glutaminyl-tRNA(Gln) + L-glutamate + ADP + phosphate + H(+). Its function is as follows. Allows the formation of correctly charged Gln-tRNA(Gln) through the transamidation of misacylated Glu-tRNA(Gln) in the mitochondria. The reaction takes place in the presence of glutamine and ATP through an activated gamma-phospho-Glu-tRNA(Gln). Required for proper protein synthesis within the mitochondrion. The protein is Glutamyl-tRNA(Gln) amidotransferase subunit F, mitochondrial of Candida tropicalis (strain ATCC MYA-3404 / T1) (Yeast).